Here is a 246-residue protein sequence, read N- to C-terminus: uncharacterized protein (246 aa).

Phosphoserine is present on Ser194.

This is an uncharacterized protein from Schizosaccharomyces pombe (strain 972 / ATCC 24843) (Fission yeast).